The chain runs to 378 residues: Geraniol dehydrogenase (378 aa).

Zn(2+) is bound by residues C48, H75, C105, C108, C111, C119, and C179.

Belongs to the zinc-containing alcohol dehydrogenase family. Monomer. It depends on Zn(2+) as a cofactor.

It catalyses the reaction (2E)-geraniol + NAD(+) = (2E)-geranial + NADH + H(+). The enzyme catalyses (2E,6E)-farnesol + NAD(+) = (2E,6E)-farnesal + NADH + H(+). Its function is as follows. Catalyzes the NAD(+)-dependent oxidation of geraniol to geranial, playing an important role in the biosynthesis of neral, an alarm pheromone. Cannot use NADP(+). Also acts as a farnesol dehydrogenase by catalyzing the oxidation of (2E,6E)-farnesol to (2E,6E)-farnesal, with lower activity compared to geraniol dehydrogenase activity. This Carpoglyphus lactis (Dried fruit mite) protein is Geraniol dehydrogenase.